A 177-amino-acid chain; its full sequence is Large ribosomal subunit protein uL6 (177 aa).

This sequence belongs to the universal ribosomal protein uL6 family. As to quaternary structure, part of the 50S ribosomal subunit.

Functionally, this protein binds to the 23S rRNA, and is important in its secondary structure. It is located near the subunit interface in the base of the L7/L12 stalk, and near the tRNA binding site of the peptidyltransferase center. The polypeptide is Large ribosomal subunit protein uL6 (Serratia proteamaculans (strain 568)).